Consider the following 206-residue polypeptide: Large ribosomal subunit protein mL40 (206 aa).

Residues 1–46 constitute a mitochondrion transit peptide; that stretch reads MATGVMLCAARALRPRSWIPGTCQAHVRHTHQRASLLAFWDLIPMR. The tract at residues 170–189 is disordered; sequence PFEKEGPHYTPPISNYQAPE.

It belongs to the mitochondrion-specific ribosomal protein mL40 family. As to quaternary structure, component of the mitochondrial ribosome large subunit (39S) which comprises a 16S rRNA and about 50 distinct proteins. In terms of tissue distribution, ubiquitous.

The protein resides in the mitochondrion. The polypeptide is Large ribosomal subunit protein mL40 (Mrpl40) (Mus musculus (Mouse)).